We begin with the raw amino-acid sequence, 449 residues long: Protein tweety homolog 1 (449 aa).

Residues 1–43 (MSSSHGYRASWWTYILHQVPHTNFQFEVVDNQFAPQEWPYQQA) are Extracellular-facing. The helical transmembrane segment at 44-64 (LLFLASIAGLCLAISLILICV) threads the bilayer. At 65–86 (YLIRFCCCSSQEDDDSKSHRVC) the chain is on the cytoplasmic side. A helical membrane pass occupies residues 87–107 (CVTWSCVAAVIICCAGIGIGF). At 108-212 (YGNSETNDGV…QVNFIEDYRW (105 aa)) the chain is on the extracellular side. N-linked (GlcNAc...) asparagine glycosylation is present at asparagine 128. A helical membrane pass occupies residues 213–233 (LAYILLLLLDLIICLFTLLGL). Residues 234–238 (AKQIK) lie on the Cytoplasmic side of the membrane. Residues 239–259 (WLVIVMTVVSFFVLLLSWGSM) traverse the membrane as a helical segment. Over 260-388 (GLEMATAVGL…LKGLCYDGME (129 aa)) the chain is Extracellular. Intrachain disulfides connect cysteine 273–cysteine 383 and cysteine 301–cysteine 368. Asparagine 282 and asparagine 353 each carry an N-linked (GlcNAc...) asparagine glycan. The chain crosses the membrane as a helical span at residues 389–409 (GILFLLLFSFLSALSFTAAIC). Over 410-449 (SLPRAWKRFQNRDLDYDDMDEDDPFNPQESKRFVQWQSSI) the chain is Cytoplasmic.

The protein belongs to the tweety family. Homotetramer; disulfide-linked. Homodimer.

The protein resides in the cell membrane. The catalysed reaction is chloride(in) = chloride(out). It catalyses the reaction L-glutamate(out) = L-glutamate(in). In terms of biological role, may act as a calcium-independent, swelling-dependent volume-regulated anion channel (VRAC-swell) which plays a pivotal role in the process of regulatory volume decrease (RVD) in the brain through the efflux of anions like chloride and organic osmolytes like glutamate. In Xenopus tropicalis (Western clawed frog), this protein is Protein tweety homolog 1 (ttyh1).